The primary structure comprises 436 residues: Chaperone SurA (436 aa).

A signal peptide spans 1–30 (MKFFQRPERRLKQWGLALLLAASALLPARA). 2 PpiC domains span residues 180–281 (ETEY…KLVD) and 291–389 (VTQT…QVLE).

The protein resides in the periplasm. The catalysed reaction is [protein]-peptidylproline (omega=180) = [protein]-peptidylproline (omega=0). In terms of biological role, chaperone involved in the correct folding and assembly of outer membrane proteins. Recognizes specific patterns of aromatic residues and the orientation of their side chains, which are found more frequently in integral outer membrane proteins. May act in both early periplasmic and late outer membrane-associated steps of protein maturation. The chain is Chaperone SurA from Thiobacillus denitrificans (strain ATCC 25259 / T1).